The sequence spans 251 residues: Endonuclease NucS (251 aa).

Residues 230–240 (LEPPKKGNEKR) show a composition bias toward basic and acidic residues. The segment at 230–251 (LEPPKKGNEKRSKQKTLDFFTP) is disordered.

This sequence belongs to the NucS endonuclease family. Homodimer. Interacts with PCNA.

The protein localises to the cytoplasm. Its activity is regulated as follows. Activity is modulated by PCNA. PCNA increases the binding affinity of NucS towards ssDNA as well as branched DNA substrates carrying either 3' or 5' flaps. PCNA is also required for optimal loading of NucS on its substrates and to direct activity towards ss/dsDNA junction. Its function is as follows. Cleaves both 3' and 5' ssDNA extremities of branched DNA structures. Binds to ssDNA. The protein is Endonuclease NucS of Pyrococcus abyssi (strain GE5 / Orsay).